Here is a 499-residue protein sequence, read N- to C-terminus: Bifunctional purine biosynthesis protein PurH (499 aa).

In terms of domain architecture, MGS-like spans 1–144 (MIKRALISVF…KNFKDVVVLT (144 aa)).

Belongs to the PurH family.

It catalyses the reaction (6R)-10-formyltetrahydrofolate + 5-amino-1-(5-phospho-beta-D-ribosyl)imidazole-4-carboxamide = 5-formamido-1-(5-phospho-D-ribosyl)imidazole-4-carboxamide + (6S)-5,6,7,8-tetrahydrofolate. The enzyme catalyses IMP + H2O = 5-formamido-1-(5-phospho-D-ribosyl)imidazole-4-carboxamide. Its pathway is purine metabolism; IMP biosynthesis via de novo pathway; 5-formamido-1-(5-phospho-D-ribosyl)imidazole-4-carboxamide from 5-amino-1-(5-phospho-D-ribosyl)imidazole-4-carboxamide (10-formyl THF route): step 1/1. The protein operates within purine metabolism; IMP biosynthesis via de novo pathway; IMP from 5-formamido-1-(5-phospho-D-ribosyl)imidazole-4-carboxamide: step 1/1. The protein is Bifunctional purine biosynthesis protein PurH of Clostridium botulinum (strain Okra / Type B1).